The chain runs to 882 residues: DNA mismatch repair protein MutS (882 aa).

ATP is bound at residue 627 to 634 (GPNMAGKS).

The protein belongs to the DNA mismatch repair MutS family.

This protein is involved in the repair of mismatches in DNA. It is possible that it carries out the mismatch recognition step. This protein has a weak ATPase activity. The polypeptide is DNA mismatch repair protein MutS (Anaeromyxobacter dehalogenans (strain 2CP-C)).